The chain runs to 122 residues: U1 small nuclear ribonucleoprotein C (122 aa).

The Matrin-type zinc-finger motif lies at 4-36; sequence YFCDYCDTYLTHDSPSVRKTHCSGRKHKDNVKM.

It belongs to the U1 small nuclear ribonucleoprotein C family. As to quaternary structure, U1 snRNP is composed of the 7 core Sm proteins B/B', D1, D2, D3, E, F and G that assemble in a heptameric protein ring on the Sm site of the small nuclear RNA to form the core snRNP, and at least 3 U1 snRNP-specific proteins U1-70K, U1-A and U1-C. U1-C interacts with U1 snRNA and the 5' splice-site region of the pre-mRNA.

It is found in the nucleus. Functionally, component of the spliceosomal U1 snRNP, which is essential for recognition of the pre-mRNA 5' splice-site and the subsequent assembly of the spliceosome. U1-C is directly involved in initial 5' splice-site recognition for both constitutive and regulated alternative splicing. The interaction with the 5' splice-site seems to precede base-pairing between the pre-mRNA and the U1 snRNA. Stimulates commitment or early (E) complex formation by stabilizing the base pairing of the 5' end of the U1 snRNA and the 5' splice-site region. The polypeptide is U1 small nuclear ribonucleoprotein C (Ciona intestinalis (Transparent sea squirt)).